The sequence spans 25 residues: Aggression-stimulating peptide (25 aa).

Expressed by the skin glands of male frogs.

It is found in the secreted. Its function is as follows. Stimulates aggressive behavior in male frogs. No effect on female frogs. The polypeptide is Aggression-stimulating peptide (Leptodactylus fallax (Mountain chicken frog)).